The primary structure comprises 230 residues: Orotidine 5'-phosphate decarboxylase (230 aa).

Residues aspartate 8, lysine 30, 59-68 (DLKLYDIPNT), threonine 118, arginine 178, glutamine 187, glycine 207, and arginine 208 each bind substrate. The active-site Proton donor is lysine 61.

The protein belongs to the OMP decarboxylase family. Type 1 subfamily. Homodimer.

It carries out the reaction orotidine 5'-phosphate + H(+) = UMP + CO2. Its pathway is pyrimidine metabolism; UMP biosynthesis via de novo pathway; UMP from orotate: step 2/2. Its function is as follows. Catalyzes the decarboxylation of orotidine 5'-monophosphate (OMP) to uridine 5'-monophosphate (UMP). In Sulfurovum sp. (strain NBC37-1), this protein is Orotidine 5'-phosphate decarboxylase.